A 157-amino-acid chain; its full sequence is SsrA-binding protein (157 aa).

This sequence belongs to the SmpB family.

The protein resides in the cytoplasm. Required for rescue of stalled ribosomes mediated by trans-translation. Binds to transfer-messenger RNA (tmRNA), required for stable association of tmRNA with ribosomes. tmRNA and SmpB together mimic tRNA shape, replacing the anticodon stem-loop with SmpB. tmRNA is encoded by the ssrA gene; the 2 termini fold to resemble tRNA(Ala) and it encodes a 'tag peptide', a short internal open reading frame. During trans-translation Ala-aminoacylated tmRNA acts like a tRNA, entering the A-site of stalled ribosomes, displacing the stalled mRNA. The ribosome then switches to translate the ORF on the tmRNA; the nascent peptide is terminated with the 'tag peptide' encoded by the tmRNA and targeted for degradation. The ribosome is freed to recommence translation, which seems to be the essential function of trans-translation. This chain is SsrA-binding protein, found in Limosilactobacillus reuteri (strain DSM 20016) (Lactobacillus reuteri).